The sequence spans 272 residues: Glutamate 5-kinase (272 aa).

Lys-14 is an ATP binding site. Positions 54, 141, and 157 each coordinate substrate. Residues 177–178 (SD) and 219–225 (TGGMLSK) contribute to the ATP site.

Belongs to the glutamate 5-kinase family.

The protein resides in the cytoplasm. It catalyses the reaction L-glutamate + ATP = L-glutamyl 5-phosphate + ADP. The protein operates within amino-acid biosynthesis; L-proline biosynthesis; L-glutamate 5-semialdehyde from L-glutamate: step 1/2. Functionally, catalyzes the transfer of a phosphate group to glutamate to form L-glutamate 5-phosphate. This Streptococcus pyogenes serotype M28 (strain MGAS6180) protein is Glutamate 5-kinase.